The chain runs to 709 residues: Protein SOSEKI 3 (709 aa).

The tract at residues serine 8–aspartate 101 is DIX-like oligomerization domain. Disordered stretches follow at residues leucine 242–methionine 266, arginine 315–serine 344, glycine 358–cysteine 393, proline 411–serine 439, and aspartate 506–proline 560. Basic and acidic residues predominate over residues glutamate 329–glutamate 342. Residues asparagine 417–asparagine 436 show a composition bias toward basic and acidic residues. Over residues valine 529 to proline 544 the composition is skewed to polar residues. The C2HC/C3H-type zinc-finger motif lies at isoleucine 663–alanine 692. Residues cysteine 667, cysteine 670, histidine 682, and cysteine 686 each contribute to the Zn(2+) site.

The protein belongs to the SOSEKI family. Homodimer. Forms long polymer filaments with other SOKs proteins polymers crucial for polar localization and biological activity. Zn(2+) is required as a cofactor.

Its subcellular location is the cell membrane. Its function is as follows. SOSEKI proteins locally interpret global polarity cues and can influence cell division orientation to coordinate cell polarization relative to body axes. This chain is Protein SOSEKI 3, found in Physcomitrium patens (Spreading-leaved earth moss).